Reading from the N-terminus, the 326-residue chain is Cinnamoyl-CoA reductase CAD2 (326 aa).

Residues Gly-14–Ala-20, Arg-39, Lys-46, Asn-66–Leu-67, and Thr-86–Ser-88 contribute to the NADP(+) site. Ser-130, Tyr-136, Arg-141, and Tyr-165 together coordinate (E)-coniferaldehyde. Residues Tyr-165, Lys-169, Pro-192–Val-195, and Ser-207 each bind NADP(+). Lys-169 functions as the Proton donor in the catalytic mechanism. (E)-coniferaldehyde is bound by residues Met-194, Ser-207, Phe-226, Val-257, and Tyr-290.

It belongs to the NAD(P)-dependent epimerase/dehydratase family. Dihydroflavonol-4-reductase subfamily.

The protein localises to the cytoplasm. The catalysed reaction is (E)-cinnamaldehyde + NADP(+) + CoA = (E)-cinnamoyl-CoA + NADPH + H(+). The enzyme catalyses (E)-coniferaldehyde + NADP(+) + CoA = (E)-feruloyl-CoA + NADPH + H(+). It carries out the reaction (E)-4-coumaraldehyde + NADP(+) + CoA = (E)-4-coumaroyl-CoA + NADPH + H(+). It participates in aromatic compound metabolism; phenylpropanoid biosynthesis. Involved in lignin biosynthesis. Regulates the monolignol composition by catalyzing the conversion of cinnamoyl-CoAs into their corresponding cinnamaldehydes. Can use coumaraldehyde and coniferaldehyde as substrates, but barely sinapaldehyde. This Medicago truncatula (Barrel medic) protein is Cinnamoyl-CoA reductase CAD2.